Reading from the N-terminus, the 649-residue chain is Thioredoxin reductase 1, cytoplasmic (649 aa).

Position 1 is an N-acetylmethionine (methionine 1). The interval 1–49 (MGCAEGKAVAAAAPTELQTKGKNGDGRRRSAKDHHPGKTLPENPAGFTS) is disordered. The span at 22 to 36 (KNGDGRRRSAKDHHP) shows a compositional bias: basic and acidic residues. The region spanning 56-156 (RALLQAYIDG…KLLKMNGPED (101 aa)) is the Glutaredoxin domain. The segment at 145-149 (LQKLL) is required for interaction with ESR1 and ESR2. FAD is bound by residues 172-173 (SG), 192-193 (DF), 208-209 (TC), and 213-217 (GCIPK). Cysteines 209 and 214 form a disulfide. Lysine 218 is modified (N6-succinyllysine). Position 281 is a phosphotyrosine (tyrosine 281). FAD-binding positions include 281–282 (YG) and threonine 311. NADP(+) is bound by residues arginine 316, 348–354 (ASYVALE), 371–372 (RS), arginine 376, 376–378 (RGF), 442–443 (GR), and lysine 465. Tyrosine 350 contributes to the FAD binding site. FAD contacts are provided by residues aspartate 484, 491 to 493 (ELT), and histidine 622. Glutamate 491 provides a ligand contact to NADP(+). Residue histidine 622 is the Proton acceptor of the active site. Positions 647–648 (CU) form a cross-link, cysteinyl-selenocysteine (Cys-Sec). A non-standard amino acid (selenocysteine) is located at residue selenocysteine 648.

This sequence belongs to the class-I pyridine nucleotide-disulfide oxidoreductase family. As to quaternary structure, homodimer. Interacts with HERC5. Interacts with ESR1 and ESR2. The cofactor is FAD. In terms of processing, the N-terminus is blocked. ISGylated. As to expression, expressed predominantly in Leydig cells (at protein level). Also expressed in ovary, spleen, heart, liver, kidney and pancreas and in a number of cancer cell lines. Widely expressed with highest levels in kidney, testis, uterus, ovary, prostate, placenta and fetal liver.

It localises to the cytoplasm. Its subcellular location is the nucleus. It catalyses the reaction [thioredoxin]-dithiol + NADP(+) = [thioredoxin]-disulfide + NADPH + H(+). The enzyme catalyses H2O2 + NADPH + H(+) = NADP(+) + 2 H2O. Functionally, reduces disulfideprotein thioredoxin (Trx) to its dithiol-containing form. Homodimeric flavoprotein involved in the regulation of cellular redox reactions, growth and differentiation. Contains a selenocysteine residue at the C-terminal active site that is essential for catalysis. Also has reductase activity on hydrogen peroxide (H2O2). In terms of biological role, induces actin and tubulin polymerization, leading to formation of cell membrane protrusions. Its function is as follows. Enhances the transcriptional activity of estrogen receptors ESR1 and ESR2. Enhances the transcriptional activity of the estrogen receptor ESR2 only. Mediates cell death induced by a combination of interferon-beta and retinoic acid. In Homo sapiens (Human), this protein is Thioredoxin reductase 1, cytoplasmic.